A 359-amino-acid polypeptide reads, in one-letter code: GTP cyclohydrolase FolE2 (359 aa).

This sequence belongs to the GTP cyclohydrolase IV family.

It carries out the reaction GTP + H2O = 7,8-dihydroneopterin 3'-triphosphate + formate + H(+). It participates in cofactor biosynthesis; 7,8-dihydroneopterin triphosphate biosynthesis; 7,8-dihydroneopterin triphosphate from GTP: step 1/1. Its function is as follows. Converts GTP to 7,8-dihydroneopterin triphosphate. This is GTP cyclohydrolase FolE2 from Cereibacter sphaeroides (strain ATCC 17025 / ATH 2.4.3) (Rhodobacter sphaeroides).